Reading from the N-terminus, the 199-residue chain is Sulfocyanin (199 aa).

A helical; Signal-anchor for type II membrane protein transmembrane segment spans residues 7–27 (VLPVVVGILVVIIAVAVGVYV). Residues 79–188 (NFNGTSSGSL…SGMWAVLVAS (110 aa)) form the Plastocyanin-like domain. Cu cation is bound by residues histidine 110, cysteine 171, histidine 176, and methionine 181.

This sequence belongs to the multicopper oxidase family.

It is found in the cell membrane. Its function is as follows. The 4 redox proteins SoxE, SoxF, SoxG and SoxH probably form part of a membrane respiratory complex together with SoxM, a catalytic subunit of cytochrome oxidase. In Sulfolobus acidocaldarius (strain ATCC 33909 / DSM 639 / JCM 8929 / NBRC 15157 / NCIMB 11770), this protein is Sulfocyanin (soxE).